A 222-amino-acid polypeptide reads, in one-letter code: Uridine kinase (222 aa).

13–20 (GGSGAGKT) serves as a coordination point for ATP.

Belongs to the uridine kinase family.

It localises to the cytoplasm. The catalysed reaction is uridine + ATP = UMP + ADP + H(+). It carries out the reaction cytidine + ATP = CMP + ADP + H(+). The protein operates within pyrimidine metabolism; CTP biosynthesis via salvage pathway; CTP from cytidine: step 1/3. Its pathway is pyrimidine metabolism; UMP biosynthesis via salvage pathway; UMP from uridine: step 1/1. This Chlamydia pneumoniae (Chlamydophila pneumoniae) protein is Uridine kinase.